Here is a 117-residue protein sequence, read N- to C-terminus: Ribonuclease P protein component (117 aa).

The protein belongs to the RnpA family. Consists of a catalytic RNA component (M1 or rnpB) and a protein subunit.

It carries out the reaction Endonucleolytic cleavage of RNA, removing 5'-extranucleotides from tRNA precursor.. Functionally, RNaseP catalyzes the removal of the 5'-leader sequence from pre-tRNA to produce the mature 5'-terminus. It can also cleave other RNA substrates such as 4.5S RNA. The protein component plays an auxiliary but essential role in vivo by binding to the 5'-leader sequence and broadening the substrate specificity of the ribozyme. The chain is Ribonuclease P protein component from Aliivibrio salmonicida (strain LFI1238) (Vibrio salmonicida (strain LFI1238)).